The following is a 751-amino-acid chain: ATP-dependent DNA helicase Hel308 (751 aa).

ATP contacts are provided by residues glutamine 20 and 39 to 46 (IPTASGKT). The Helicase ATP-binding domain occupies 26 to 196 (EGLLDKSKNF…WLNAKLVTDE (171 aa)). Positions 143–146 (DEIH) match the DEAH box motif. One can recognise a Helicase C-terminal domain in the interval 235–435 (NLTDLIVDSV…VLRVHILGLI (201 aa)).

This sequence belongs to the helicase family. Hel308 subfamily. In terms of assembly, monomer.

It carries out the reaction Couples ATP hydrolysis with the unwinding of duplex DNA by translocating in the 3'-5' direction.. It catalyses the reaction ATP + H2O = ADP + phosphate + H(+). DNA-dependent ATPase and 3'-5' DNA helicase that may be involved in repair of stalled replication forks. In Methanococcus vannielii (strain ATCC 35089 / DSM 1224 / JCM 13029 / OCM 148 / SB), this protein is ATP-dependent DNA helicase Hel308.